The chain runs to 685 residues: Small ribosomal subunit protein mS39 (685 aa).

The N-terminal 10 residues, 1–10 (MAAAAVAARR), are a transit peptide targeting the mitochondrion. Lysine 127 is modified (N6-acetyllysine). PPR repeat units lie at residues 150–184 (IEDVSEAALEERIRLRKVRASVDMFDQLLQAGTTV), 185–220 (SLETTNSLLDLLCYYGDQEPPADYPFQQTEHLENLE), 254–288 (NARSYCTMIRGMVKHRAYAQALNVYTELLNNRLSA), 289–329 (DVYT…KVKP), 330–366 (NLQTFNTILKGLRKCYSLGRIPALQILREMKHIGIEP), 367–407 (SLAT…TFSP), 412–446 (DGRFFQLAMSVCSSLRDLELAYQVHRLLNTGDNRK), 454–488 (RKVYYSKFFSLICSLEQIDVTLKWYKDLIPSVFLP), 489–523 (HYQIFIGLLQALDVANRLELVPQIWKDSKEYSHTF), and 572–606 (PANPLQYIAVLFLRGGRSQEAWKMLELFKKHKKIP). The segment at 663 to 685 (LGNLTELNSSDGESSSDSDSDDK) is disordered. Positions 676–685 (SSSDSDSDDK) are enriched in acidic residues.

It belongs to the mitochondrion-specific ribosomal protein mS39 family. As to quaternary structure, component of the mitochondrial ribosome small subunit (28S) which comprises a 12S rRNA and about 30 distinct proteins. Associated with the 12S mitochondrial rRNA (12S mt-rRNA).

It localises to the mitochondrion. Functionally, mitochondrial RNA-binding protein that has a role in mitochondrial translation. The sequence is that of Small ribosomal subunit protein mS39 (Ptcd3) from Mus musculus (Mouse).